Here is an 829-residue protein sequence, read N- to C-terminus: Dipeptidyl peptidase family member 2 (829 aa).

The Cytoplasmic segment spans residues 1-27; it reads MENDNYDVEEQGCSVFNGKHGYFARSC. Residues 28–48 form a helical; Signal-anchor for type II membrane protein membrane-spanning segment; it reads CVVFILIICVIFVFSVIFTFM. At 49–829 the chain is on the extracellular side; it reads QNPINLNSDN…DCFKSNLDLL (781 aa). N-linked (GlcNAc...) asparagine glycans are attached at residues Asn-61, Asn-66, Asn-183, Asn-209, Asn-314, and Asn-359. The cysteines at positions 514 and 533 are disulfide-linked. Residue Ser-691 is the Charge relay system of the active site. A disulfide bridge links Cys-711 with Cys-821. Asn-754 carries an N-linked (GlcNAc...) asparagine glycan. Catalysis depends on charge relay system residues Asp-768 and His-800.

It belongs to the peptidase S9B family. DPPIV subfamily.

The protein localises to the cell membrane. Functionally, removes N-terminal dipeptides sequentially from polypeptides. Essential for control of distal tip cell migration. The sequence is that of Dipeptidyl peptidase family member 2 (dpf-2) from Caenorhabditis elegans.